The chain runs to 106 residues: Defensin-like protein 1 (106 aa).

The signal sequence occupies residues 1–25 (MARSLCFMAFAVLAMMLFVAYEVQA). 4 disulfides stabilise this stretch: Cys-29/Cys-73, Cys-40/Cys-60, Cys-46/Cys-67, and Cys-50/Cys-69.

It belongs to the DEFL family.

The protein localises to the secreted. Its subcellular location is the vacuole. The protein is Defensin-like protein 1 (THIO1) of Nicotiana paniculata.